The primary structure comprises 620 residues: MYND-type zinc finger protein MUB1 (620 aa).

The segment at asparagine 514–cysteine 555 adopts an MYND-type; degenerate zinc-finger fold. Residues cysteine 530, cysteine 533, histidine 551, and cysteine 555 each coordinate Zn(2+). Over residues methionine 563–valine 606 the composition is skewed to polar residues. The tract at residues methionine 563–glutamate 620 is disordered. The segment covering isoleucine 610–glutamate 620 has biased composition (basic and acidic residues).

It belongs to the MUB1/samB family. In terms of assembly, interacts with UBR2 and RPN4.

It is found in the cytoplasm. Its function is as follows. Involved in the determination of the onset of polarized growth. Required for the ubiquitin-dependent degradation of RPN4. Cooperates with UBR2 to transfer ubiquitin from RAD6 to RPN4. In Saccharomyces cerevisiae (strain ATCC 204508 / S288c) (Baker's yeast), this protein is MYND-type zinc finger protein MUB1 (MUB1).